A 317-amino-acid polypeptide reads, in one-letter code: Acetyl-coenzyme A carboxylase carboxyl transferase subunit alpha (317 aa).

Residues 40-293 enclose the CoA carboxyltransferase C-terminal domain; sequence LEGRVRDAMV…ETVIGDALKE (254 aa).

It belongs to the AccA family. In terms of assembly, acetyl-CoA carboxylase is a heterohexamer composed of biotin carboxyl carrier protein (AccB), biotin carboxylase (AccC) and two subunits each of ACCase subunit alpha (AccA) and ACCase subunit beta (AccD).

The protein resides in the cytoplasm. The catalysed reaction is N(6)-carboxybiotinyl-L-lysyl-[protein] + acetyl-CoA = N(6)-biotinyl-L-lysyl-[protein] + malonyl-CoA. It participates in lipid metabolism; malonyl-CoA biosynthesis; malonyl-CoA from acetyl-CoA: step 1/1. In terms of biological role, component of the acetyl coenzyme A carboxylase (ACC) complex. First, biotin carboxylase catalyzes the carboxylation of biotin on its carrier protein (BCCP) and then the CO(2) group is transferred by the carboxyltransferase to acetyl-CoA to form malonyl-CoA. The chain is Acetyl-coenzyme A carboxylase carboxyl transferase subunit alpha from Rhizobium meliloti (strain 1021) (Ensifer meliloti).